Reading from the N-terminus, the 218-residue chain is uncharacterized protein (218 aa).

Helical transmembrane passes span 14 to 34 (CLLS…YFTS) and 175 to 195 (LIIP…LALV).

This sequence to H.pylori HP0270.

Its subcellular location is the cell membrane. This is an uncharacterized protein from Rickettsia prowazekii (strain Madrid E).